A 197-amino-acid chain; its full sequence is ATP-dependent Clp protease proteolytic subunit (197 aa).

Ser98 serves as the catalytic Nucleophile. The active site involves His123.

It belongs to the peptidase S14 family. Fourteen ClpP subunits assemble into 2 heptameric rings which stack back to back to give a disk-like structure with a central cavity, resembling the structure of eukaryotic proteasomes.

It localises to the cytoplasm. The enzyme catalyses Hydrolysis of proteins to small peptides in the presence of ATP and magnesium. alpha-casein is the usual test substrate. In the absence of ATP, only oligopeptides shorter than five residues are hydrolyzed (such as succinyl-Leu-Tyr-|-NHMec, and Leu-Tyr-Leu-|-Tyr-Trp, in which cleavage of the -Tyr-|-Leu- and -Tyr-|-Trp bonds also occurs).. In terms of biological role, cleaves peptides in various proteins in a process that requires ATP hydrolysis. Has a chymotrypsin-like activity. Plays a major role in the degradation of misfolded proteins. This is ATP-dependent Clp protease proteolytic subunit from Limosilactobacillus reuteri (strain DSM 20016) (Lactobacillus reuteri).